We begin with the raw amino-acid sequence, 206 residues long: Large ribosomal subunit protein bL25 (206 aa).

This sequence belongs to the bacterial ribosomal protein bL25 family. CTC subfamily. As to quaternary structure, part of the 50S ribosomal subunit; part of the 5S rRNA/L5/L18/L25 subcomplex. Contacts the 5S rRNA. Binds to the 5S rRNA independently of L5 and L18.

Functionally, this is one of the proteins that binds to the 5S RNA in the ribosome where it forms part of the central protuberance. The polypeptide is Large ribosomal subunit protein bL25 (Ralstonia nicotianae (strain ATCC BAA-1114 / GMI1000) (Ralstonia solanacearum)).